A 353-amino-acid polypeptide reads, in one-letter code: Transcription factor MafA (353 aa).

At Ser14 the chain carries Phosphoserine. Lys32 participates in a covalent cross-link: Glycyl lysine isopeptide (Lys-Gly) (interchain with G-Cter in SUMO2). Disordered stretches follow at residues 40–108 (RFCH…GGTS) and 177–219 (ADDM…GAGH). Residues 46 to 73 (PPGSLSSTPLSTPCSSVPSSPSFCAPSP) are compositionally biased toward low complexity. A Phosphoserine modification is found at Ser49. Phosphothreonine is present on residues Thr53 and Thr57. Residues Ser61 and Ser65 each carry the phosphoserine modification. Gly residues predominate over residues 74–93 (GTGGGGGAGGGGGSSQAGGA). The segment covering 183–210 (GHHHGAHHAAHHHHAAHHHHHHHHHHGG) has biased composition (basic residues). A basic motif region spans residues 254 to 279 (RLKQKRRTLKNRGYAQSCRFKRVQQR). The bZIP domain occupies 254-317 (RLKQKRRTLK…DLYKEKYEKL (64 aa)). Positions 282–303 (LESEKCQLQSQVEQLKLEVGRL) are leucine-zipper. The interval 315–353 (EKLAGRGGPGSAGGAGFPREPSPPQAGPGGAKGTADFFL) is disordered. Residues 319 to 330 (GRGGPGSAGGAG) show a composition bias toward gly residues.

It belongs to the bZIP family. Maf subfamily. In terms of assembly, forms homodimers or heterodimers. Monomers and dimers are able to bind DNA, but the off-rate is faster for monomers. Interacts with NEUROD1 and PDX1. May interact with MAFB, FOS, JUN and PCAF. In terms of processing, ubiquitinated, leading to its degradation by the proteasome. Phosphorylated at tyrosines. As to expression, expressed in the islets of Langerhans (at protein level).

The protein resides in the nucleus. Its function is as follows. Transcription factor that activates insulin gene expression. Acts synergistically with NEUROD1/BETA2 and PDX1. Binds the insulin enhancer C1/RIPE3b element. Binds to consensus TRE-type MARE 5'-TGCTGACTCAGCA-3' DNA sequence. This Homo sapiens (Human) protein is Transcription factor MafA (MAFA).